Reading from the N-terminus, the 439-residue chain is Tol-Pal system protein TolB (439 aa).

Residues 1–22 (MKKPLRWLAALTVLLLPLSALA) form the signal peptide.

This sequence belongs to the TolB family. The Tol-Pal system is composed of five core proteins: the inner membrane proteins TolA, TolQ and TolR, the periplasmic protein TolB and the outer membrane protein Pal. They form a network linking the inner and outer membranes and the peptidoglycan layer.

It is found in the periplasm. Its function is as follows. Part of the Tol-Pal system, which plays a role in outer membrane invagination during cell division and is important for maintaining outer membrane integrity. The sequence is that of Tol-Pal system protein TolB from Xanthomonas oryzae pv. oryzae (strain MAFF 311018).